A 151-amino-acid polypeptide reads, in one-letter code: Small ribosomal subunit protein bS6 (151 aa).

The tract at residues 94 to 151 (EEHEQGPSAMMRKRDDDDRGERGERPRGPRPERGERGERGERGPRRPREDNIGEEGLY) is disordered. A compositionally biased stretch (basic and acidic residues) spans 105–144 (RKRDDDDRGERGERPRGPRPERGERGERGERGPRRPREDN).

Belongs to the bacterial ribosomal protein bS6 family.

Binds together with bS18 to 16S ribosomal RNA. The sequence is that of Small ribosomal subunit protein bS6 from Beijerinckia indica subsp. indica (strain ATCC 9039 / DSM 1715 / NCIMB 8712).